We begin with the raw amino-acid sequence, 420 residues long: Exodeoxyribonuclease 7 large subunit (420 aa).

This sequence belongs to the XseA family. Heterooligomer composed of large and small subunits.

The protein resides in the cytoplasm. It carries out the reaction Exonucleolytic cleavage in either 5'- to 3'- or 3'- to 5'-direction to yield nucleoside 5'-phosphates.. In terms of biological role, bidirectionally degrades single-stranded DNA into large acid-insoluble oligonucleotides, which are then degraded further into small acid-soluble oligonucleotides. This is Exodeoxyribonuclease 7 large subunit from Helicobacter acinonychis (strain Sheeba).